The primary structure comprises 628 residues: tRNA uridine 5-carboxymethylaminomethyl modification enzyme MnmG (628 aa).

An FAD-binding site is contributed by glycine 14 to glycine 19. Glycine 274–phenylalanine 288 is an NAD(+) binding site.

It belongs to the MnmG family. Homodimer. Heterotetramer of two MnmE and two MnmG subunits. FAD serves as cofactor.

It localises to the cytoplasm. Its function is as follows. NAD-binding protein involved in the addition of a carboxymethylaminomethyl (cmnm) group at the wobble position (U34) of certain tRNAs, forming tRNA-cmnm(5)s(2)U34. This chain is tRNA uridine 5-carboxymethylaminomethyl modification enzyme MnmG, found in Clostridium kluyveri (strain ATCC 8527 / DSM 555 / NBRC 12016 / NCIMB 10680 / K1).